Consider the following 436-residue polypeptide: Protein PhoH2 (436 aa).

A PINc domain is found at 12 to 137 (RTYVLDTSVL…LVSKDLPMRL (126 aa)).

The protein in the N-terminal section; belongs to the PINc/VapC protein family. It in the C-terminal section; belongs to the PhoH family.

It catalyses the reaction n ATP + n H2O + wound RNA = n ADP + n phosphate + unwound RNA.. It carries out the reaction ATP + H2O = ADP + phosphate + H(+). The enzyme catalyses GTP + H2O = GDP + phosphate + H(+). In terms of biological role, unwinds and/or cleaves 5'-tailed RNA in vitro, the reaction is maximal with hydrolyzable ATP; double-stranded (ds)RNA and dsDNA are not unwound. Unlike the protein in mycobacteria there does not seem to be an antitoxin gene upstream, suggesting this is not a toxin-antitoxin system. Has ATPase and GTPase activities. This is Protein PhoH2 from Thermobispora bispora (strain ATCC 19993 / DSM 43833 / CBS 139.67 / JCM 10125 / KCTC 9307 / NBRC 14880 / R51).